The following is a 175-amino-acid chain: MALREIIILPDKRLREISKPVTEVTTEIRKLADDMFESMYEAPGIGLAAIQIAEPVRLITMDIVRKEGDGKSDPRAFINPEIVGASSEMNVYEEGCLSIPEYYAEVERPKTVRIRYTDLDGNVKEEDADGLFATCIQHEIDHLNGVLFVDHLSKLKRAMVIRKFEKAAKRGIKYV.

2 residues coordinate Fe cation: Cys96 and His138. Glu139 is a catalytic residue. Fe cation is bound at residue His142.

It belongs to the polypeptide deformylase family. Fe(2+) serves as cofactor.

The enzyme catalyses N-terminal N-formyl-L-methionyl-[peptide] + H2O = N-terminal L-methionyl-[peptide] + formate. Functionally, removes the formyl group from the N-terminal Met of newly synthesized proteins. Requires at least a dipeptide for an efficient rate of reaction. N-terminal L-methionine is a prerequisite for activity but the enzyme has broad specificity at other positions. The protein is Peptide deformylase of Rhodopseudomonas palustris (strain ATCC BAA-98 / CGA009).